We begin with the raw amino-acid sequence, 139 residues long: Arsenate reductase (139 aa).

Catalysis depends on nucleophile residues Cys10, Cys82, and Cys89. 2 disulfide bridges follow: Cys10–Cys82 and Cys82–Cys89.

This sequence belongs to the low molecular weight phosphotyrosine protein phosphatase family. Thioredoxin-coupled ArsC subfamily.

It is found in the cytoplasm. The enzyme catalyses arsenate + [thioredoxin]-dithiol + H(+) = arsenite + [thioredoxin]-disulfide + H2O. Its function is as follows. Catalyzes the reduction of arsenate [As(V)] to arsenite [As(III)]. The sequence is that of Arsenate reductase from Bacillus licheniformis (strain ATCC 14580 / DSM 13 / JCM 2505 / CCUG 7422 / NBRC 12200 / NCIMB 9375 / NCTC 10341 / NRRL NRS-1264 / Gibson 46).